Consider the following 197-residue polypeptide: Protein GrpE (197 aa).

Positions methionine 1–proline 39 are disordered.

The protein belongs to the GrpE family. As to quaternary structure, homodimer.

The protein resides in the cytoplasm. Its function is as follows. Participates actively in the response to hyperosmotic and heat shock by preventing the aggregation of stress-denatured proteins, in association with DnaK and GrpE. It is the nucleotide exchange factor for DnaK and may function as a thermosensor. Unfolded proteins bind initially to DnaJ; upon interaction with the DnaJ-bound protein, DnaK hydrolyzes its bound ATP, resulting in the formation of a stable complex. GrpE releases ADP from DnaK; ATP binding to DnaK triggers the release of the substrate protein, thus completing the reaction cycle. Several rounds of ATP-dependent interactions between DnaJ, DnaK and GrpE are required for fully efficient folding. The sequence is that of Protein GrpE from Escherichia coli O127:H6 (strain E2348/69 / EPEC).